Consider the following 589-residue polypeptide: MEIPPSPPPETAAYTLTTSSISYTIPKTSLSLLRFPATEPPSFILRNITLTAHPTEILAVVGPSGAGKSTLLDILASKTSPTSGSILLNSIPINPSSYRKISSYVPQHDSFFPLLTVSETFSFAACLLLPNPSIVSETVTSLLSELNLTHLSHTRLAQGLSGGERRRVSIGLSLLHDPCFLLLDEPTSGLDSKSAFDVIHILKSIAVSRQRTVILSIHQPSFKILSIIDRLLLLSKGTVVYHGRLDSLEGFLLFKGFTVPPQLNSLEYAMEILQELRESDGNTDATALPSIENRKQREKQSIVRYRKSRITEISLLARRFWKIIYRTRQLLLTNALEALVVGLVLGTIYINIGIGKAGIEKRFGMFAFTLTFLLSSTTETLPIFINERPILLRETSSGIYRLSSHILANTLVFLPYLFVISIIYSVSVYFLIGLCPTWQAFGYFVLVIWIILLMANSFVLFLSSLAPNYITGTSLVTILLAAFFLFSGYFISKESLPKYWLFMYFFSMYKYALDALLINEYSCLASKCLVWLEEAQTKICMVTGGDVLKKKGLHEKQRWFNVYVLLGFFVLYRVLCFLALLRRVSGSKR.

The 246-residue stretch at 16-261 (LTTSSISYTI…LLFKGFTVPP (246 aa)) folds into the ABC transporter domain. 62 to 69 (GPSGAGKS) is an ATP binding site. The region spanning 311-521 (TEISLLARRF…ALDALLINEY (211 aa)) is the ABC transmembrane type-2 domain. 7 helical membrane-spanning segments follow: residues 335-355 (ALEA…IGIG), 365-385 (MFAF…PIFI), 412-432 (VFLP…YFLI), 441-461 (FGYF…FVLF), 470-490 (ITGT…SGYF), 499-519 (YWLF…LLIN), and 560-580 (FNVY…FLAL).

It belongs to the ABC transporter superfamily. ABCG family. Eye pigment precursor importer (TC 3.A.1.204) subfamily.

It is found in the membrane. In Arabidopsis thaliana (Mouse-ear cress), this protein is ABC transporter G family member 8 (ABCG8).